The sequence spans 217 residues: Nucleolar protein 12 (217 aa).

The stretch at 34-98 (GFHKRKVERK…LVTAKTESVQ (65 aa)) forms a coiled coil. Residues 122–217 (LGLPLPEQGD…MTGKARHNGE (96 aa)) form a disordered region. Residues 130 to 141 (GDQDGSQEEEMS) are compositionally biased toward acidic residues. Composition is skewed to basic residues over residues 172 to 184 (AHSRKKVKRKHPR) and 201 to 217 (KTQRRRRMTGKARHNGE).

Belongs to the RRP17 family. Interacts with KIAA1191. In terms of tissue distribution, expressed in brain, lung, spleen, kidney and heart.

It is found in the nucleus. It localises to the nucleolus. The protein resides in the cytoplasm. Functionally, multifunctional RNA binding protein that plays a role in RNA metabolism and DNA maintenance. Participates in the resolution of DNA stress and the maintenance of genome integrity by localizing to sites of DNA insults. Also plays a role in proper nucleolar organization by limiting nucleolar size and regulating nucleolar number. Mechanistically, regulates the nucleolar levels of fibrillarin and nucleolin, two key players in pre-rRNA processing and ribosome assembly. The chain is Nucleolar protein 12 (Nol12) from Mus musculus (Mouse).